A 103-amino-acid chain; its full sequence is MSSPWSLFDDHLRLAVRLTPNGGRDALDGIEADGEGEAFLKARVTAVPEKGKANKALMLLIAKSLRIPKSSVSLVSGETARKKILRIDGDPEDLVKKLEIFLG.

The protein belongs to the UPF0235 family.

In Rhizobium johnstonii (strain DSM 114642 / LMG 32736 / 3841) (Rhizobium leguminosarum bv. viciae), this protein is UPF0235 protein RL4503.